A 215-amino-acid polypeptide reads, in one-letter code: MDTIHYMLDNAGYLASLTFQHLWLVALAVGLAIIIGVPLGVLIVRHKWLATPVLGAATLLLTIPSIALFGLMIPLFSLIGHGIGVLPAVTAVFLYSLLPIVRNTHTALDSLPPGLREAGRGIGMTFWQRLRWVEIPMALPVIFGGIRTAVVMNIGVMAIAAVIGAGGLGLLLLNGISGSDIRMLIAGALMICLLAIVLDWLLHRLQVVLTPKGIR.

An ABC transmembrane type-1 domain is found at 18–202; sequence TFQHLWLVAL…LLAIVLDWLL (185 aa). 6 helical membrane passes run 24–44, 51–73, 78–100, 132–152, 153–173, and 183–203; these read LVAL…VLIV, TPVL…GLMI, LIGH…LLPI, WVEI…AVVM, NIGV…LLLL, and MLIA…WLLH.

Belongs to the binding-protein-dependent transport system permease family. The complex is composed of two ATP-binding proteins (OsmV), two transmembrane proteins (OsmW and OsmY) and a solute-binding protein (OsmX).

It localises to the cell inner membrane. Its function is as follows. Part of the OsmU ABC transporter complex, which is involved in the uptake of osmoprotectants such as choline-O-sulfate and glycine betaine. Probably responsible for the translocation of the substrate across the membrane. This is Osmoprotectant import permease protein OsmW (osmW) from Salmonella typhimurium (strain LT2 / SGSC1412 / ATCC 700720).